The chain runs to 555 residues: Solute carrier family 2, facilitated glucose transporter member 10 (555 aa).

At 1 to 15 the chain is on the cytoplasmic side; it reads MGLSSPTLILAATVS. A helical transmembrane segment spans residues 16 to 36; it reads LLGGIVFGYELGIISGALLVL. At 37-48 the chain is on the extracellular side; that stretch reads KTVYQLTCFEQE. Residues 49-69 form a helical membrane-spanning segment; that stretch reads ALVSAVLFGALLASLIGGIII. Residues 70–82 are Cytoplasmic-facing; it reads DRWGRRTAILASN. A helical membrane pass occupies residues 83-103; that stretch reads LVVLAGSIILIATSTFWWLIV. Topologically, residues 104-105 are extracellular; the sequence is GR. The helical transmembrane segment at 106–126 threads the bilayer; sequence VTIGFAISISSMACCIYVSEI. The Cytoplasmic portion of the chain corresponds to 127–132; it reads VRPHQR. A helical transmembrane segment spans residues 133–153; the sequence is GMLVSLYETGITVGILISYAM. The Extracellular segment spans residues 154 to 165; that stretch reads NYFLSGVNESWK. N161 carries N-linked (GlcNAc...) asparagine glycosylation. The chain crosses the membrane as a helical span at residues 166-186; that stretch reads YMFGLAIVPAAFQFISILFLP. Residues 187-240 lie on the Cytoplasmic side of the membrane; the sequence is SKPHKLNFWEQDTDDGFIELEETGEAGEFKPDTYDRQYTFLDLFRSKDNMRTRT. Residues 241–261 form a helical membrane-spanning segment; it reads LLGLGLVLFQQFTGQPNVLYY. 250–251 contributes to the D-glucose binding site; the sequence is QQ. Topologically, residues 262 to 277 are extracellular; sequence ASTIFQSVGFQSNSSA. N-linked (GlcNAc...) asparagine glycosylation occurs at N274. The helical transmembrane segment at 278–298 threads the bilayer; it reads VLASVGLGVVKVASTLIAICF. Residues 299–305 are Cytoplasmic-facing; it reads ADKAGRR. The helical transmembrane segment at 306–326 threads the bilayer; that stretch reads ILLLAGCIVMTIAITGIGIVS. Residues 327–415 are Extracellular-facing; that stretch reads FTVKMDSHRD…ASPELPSNYT (89 aa). 4 N-linked (GlcNAc...) asparagine glycosylation sites follow: N344, N351, N400, and N413. A helical membrane pass occupies residues 416–436; sequence ILNWITLLSMMAFVSAFSIGF. Over 437–464 the chain is Cytoplasmic; that stretch reads GPMTWIVLSEIYPADIRGRAFAFCNSFN. W441 is a D-glucose binding site. Residues 465-483 form a helical membrane-spanning segment; sequence WAANLLITLTFLDVIASIG. The Extracellular segment spans residues 484–485; that stretch reads LS. The chain crosses the membrane as a helical span at residues 486–506; sequence WTFLLYGVVGLLAIAFIYFFI. Topologically, residues 507-555 are cytoplasmic; the sequence is PETKGQSLEEIDKQFSTKRILQKRETSKGVGKRPSSGPPYQRIGKASPS. A disordered region spans residues 528–555; it reads QKRETSKGVGKRPSSGPPYQRIGKASPS.

Belongs to the major facilitator superfamily. Sugar transporter (TC 2.A.1.1) family. Glucose transporter subfamily.

Its subcellular location is the endomembrane system. It localises to the cytoplasm. The protein localises to the perinuclear region. The enzyme catalyses D-glucose(out) = D-glucose(in). Its function is as follows. Facilitative glucose transporter required for the development of the cardiovascular system. This chain is Solute carrier family 2, facilitated glucose transporter member 10, found in Xenopus tropicalis (Western clawed frog).